The chain runs to 157 residues: Endoribonuclease YbeY (157 aa).

Zn(2+) is bound by residues His-114, His-118, and His-124.

Belongs to the endoribonuclease YbeY family. Zn(2+) serves as cofactor.

The protein resides in the cytoplasm. Functionally, single strand-specific metallo-endoribonuclease involved in late-stage 70S ribosome quality control and in maturation of the 3' terminus of the 16S rRNA. In Klebsiella pneumoniae (strain 342), this protein is Endoribonuclease YbeY.